A 59-amino-acid polypeptide reads, in one-letter code: Putative potassium channel toxin Ts24 (59 aa).

The first 22 residues, 1–22 (MKAFYGILIIFILISMIHLSQQ), serve as a signal peptide directing secretion. Intrachain disulfides connect C29/C50, C35/C55, and C39/C57.

This sequence belongs to the short scorpion toxin superfamily. Potassium channel inhibitor family. Alpha-KTx 04 subfamily. As to expression, expressed by the venom gland.

It is found in the secreted. Its function is as follows. Potently blocks Kv1.1/KCNA1 (85%), Kv1.2/KCNA2 (91%), Kv1.3/KCNA3 (89%), Kv1.6/KCNA6 (94%), and Shaker (97%). This is Putative potassium channel toxin Ts24 from Tityus serrulatus (Brazilian scorpion).